The sequence spans 853 residues: uncharacterized protein (853 aa).

Coiled coils occupy residues Arg313–Ala343 and Glu480–Ile528.

This is an uncharacterized protein from Ostreid herpesvirus 1 (isolate France) (OsHV-1).